The primary structure comprises 735 residues: Ethylene receptor 1 (735 aa).

The next 3 membrane-spanning stretches (helical) occupy residues 23–43, 54–74, and 92–112; these read ISDFFIAVAYFSIPLELIYFV, VLVQFGAFIVLCGATHLINLW, and VLTAVVSCATALMLVHIIPDL. Cu cation-binding residues include Cys-65 and His-69. The GAF domain occupies 158–307; sequence DRHTILKTTL…VVADQVAVAL (150 aa). One can recognise a Histidine kinase domain in the interval 350-586; that stretch reads VMNHEMRTPM…IFDVKLAISN (237 aa). His-353 is modified (phosphohistidine; by autocatalysis). Residues 609–726 form the Response regulatory domain; the sequence is KVLVMDENGV…NMRNVLSDRL (118 aa). Asp-657 carries the 4-aspartylphosphate modification. Lys-711 is covalently cross-linked (Glycyl lysine isopeptide (Lys-Gly) (interchain with G-Cter in ubiquitin)).

The protein belongs to the ethylene receptor family. In terms of assembly, homodimer; disulfide-linked. The cofactor is Cu cation. In terms of processing, activation probably requires a transfer of a phosphate group between a His in the transmitter domain and an Asp of the receiver domain.

The protein localises to the endoplasmic reticulum membrane. The catalysed reaction is ATP + protein L-histidine = ADP + protein N-phospho-L-histidine.. In terms of biological role, may act early in the ethylene signal transduction pathway, possibly as an ethylene receptor, or as a regulator of the pathway. In Brassica oleracea (Wild cabbage), this protein is Ethylene receptor 1 (ETR1).